Consider the following 936-residue polypeptide: Protein NLP2 (936 aa).

The tract at residues 99 to 130 is disordered; sequence IMSVNPTEAEKTGKSSGELGSDDGAHQGSSMV. The RWP-RK domain occupies 550 to 635; it reads QPSSIGHAEK…INSVHGVDRS (86 aa). Disordered stretches follow at residues 666–697, 753–782, and 794–827; these read PSVG…SCQL, CTNP…IQQE, and DKDH…RSAL. Residues 671-682 are compositionally biased toward basic and acidic residues; that stretch reads TVEENSDLKSEE. The segment covering 688–697 has biased composition (polar residues); it reads DGSQRQSCQL. Residues 754–769 show a composition bias toward low complexity; that stretch reads TNPSSSLRPSSESTRN. The segment covering 770–781 has biased composition (polar residues); that stretch reads QIVGRNSPSIQQ. Residues 801–815 show a composition bias toward low complexity; sequence STSGMTDSSSGSASS. Polar residues predominate over residues 816-825; it reads HPTFKQNTRS. The PB1 domain occupies 834-916; it reads ALTVKATYNG…RIVKLQVRDL (83 aa).

It localises to the nucleus. Probable transcription factor. This is Protein NLP2 from Oryza sativa subsp. japonica (Rice).